The chain runs to 623 residues: (-)-alpha-pinene synthase 1, chloroplastic (623 aa).

Residues 1–52 (MDLISVLPSASKSCVCLHKPLSSSTHKLKPFCKTIRILGMPRRWKFAGPSMS) constitute a chloroplast transit peptide. D374, D378, and D526 together coordinate Mg(2+). The short motif at 374-378 (DDMYD) is the DDXXD motif element.

This sequence belongs to the terpene synthase family. Tpsd subfamily. Mg(2+) is required as a cofactor. Requires Mn(2+) as cofactor.

It localises to the plastid. The protein resides in the chloroplast. The enzyme catalyses (2E)-geranyl diphosphate = (1S,5S)-alpha-pinene + diphosphate. It carries out the reaction (2E)-geranyl diphosphate = (1S,5S)-beta-pinene + diphosphate. The catalysed reaction is (2E)-geranyl diphosphate = (-)-beta-phellandrene + diphosphate. Its pathway is terpene metabolism; oleoresin biosynthesis. The protein operates within secondary metabolite biosynthesis; terpenoid biosynthesis. Functionally, monoterpene synthase (TPS) involved in the biosynthesis of monoterpene natural products included in conifer oleoresin secretions and volatile emissions; these compounds contribute to biotic and abiotic stress defense against herbivores and pathogens. Catalyzes the conversion of (2E)-geranyl diphosphate (GPP) to (-)-alpha-pinene and (-)-beta-pinene, and, to a lower extent, to (-)-beta-phellandrene. This is (-)-alpha-pinene synthase 1, chloroplastic from Pinus banksiana (Jack pine).